We begin with the raw amino-acid sequence, 121 residues long: Cysteine-rich neurotrophic factor (121 aa).

A signal peptide spans 1-18 (MLLKLIVALSLTLTLASA). Residue Asn-57 is glycosylated (N-linked (GlcNAc...) asparagine).

The protein resides in the secreted. Its function is as follows. Interacts with the p75 low-affinity neurotrophin receptor. Evokes neurite outgrowth and modulated calcium currents in pedal motor neurons. May be involved in target-derived trophic support for motor neurons. The protein is Cysteine-rich neurotrophic factor of Lymnaea stagnalis (Great pond snail).